Consider the following 157-residue polypeptide: Cuticle protein 19 (157 aa).

6 consecutive repeat copies span residues alanine 11–alanine 14, alanine 18–alanine 21, alanine 24–alanine 27, alanine 29–alanine 32, alanine 39–alanine 42, and alanine 47–alanine 50. Residues tyrosine 56–alanine 127 form the Chitin-binding type R&amp;R domain. Residues alanine 141–alanine 144 form repeat 7.

In terms of biological role, component of the cuticle of migratory locust which contains more than 100 different structural proteins. The protein is Cuticle protein 19 of Locusta migratoria (Migratory locust).